Here is a 406-residue protein sequence, read N- to C-terminus: Cysteine desulfurase IscS (406 aa).

Residues 75–76 (AT), asparagine 155, glutamine 183, and 203–205 (SSH) contribute to the pyridoxal 5'-phosphate site. Lysine 206 is modified (N6-(pyridoxal phosphate)lysine). Threonine 243 contacts pyridoxal 5'-phosphate. Residue cysteine 330 is the Cysteine persulfide intermediate of the active site. Cysteine 330 is a binding site for [2Fe-2S] cluster.

Belongs to the class-V pyridoxal-phosphate-dependent aminotransferase family. NifS/IscS subfamily. As to quaternary structure, homodimer. Forms a heterotetramer with IscU, interacts with other sulfur acceptors. Pyridoxal 5'-phosphate is required as a cofactor.

The protein localises to the cytoplasm. It catalyses the reaction (sulfur carrier)-H + L-cysteine = (sulfur carrier)-SH + L-alanine. It functions in the pathway cofactor biosynthesis; iron-sulfur cluster biosynthesis. Its function is as follows. Master enzyme that delivers sulfur to a number of partners involved in Fe-S cluster assembly, tRNA modification or cofactor biosynthesis. Catalyzes the removal of elemental sulfur atoms from cysteine to produce alanine. Functions as a sulfur delivery protein for Fe-S cluster synthesis onto IscU, an Fe-S scaffold assembly protein, as well as other S acceptor proteins. This is Cysteine desulfurase IscS from Glaesserella parasuis serovar 5 (strain SH0165) (Haemophilus parasuis).